The following is a 431-amino-acid chain: Glutamate-1-semialdehyde 2,1-aminomutase (431 aa).

Lys269 carries the N6-(pyridoxal phosphate)lysine modification.

It belongs to the class-III pyridoxal-phosphate-dependent aminotransferase family. HemL subfamily. In terms of assembly, homodimer. Requires pyridoxal 5'-phosphate as cofactor.

Its subcellular location is the cytoplasm. It catalyses the reaction (S)-4-amino-5-oxopentanoate = 5-aminolevulinate. It participates in porphyrin-containing compound metabolism; protoporphyrin-IX biosynthesis; 5-aminolevulinate from L-glutamyl-tRNA(Glu): step 2/2. The polypeptide is Glutamate-1-semialdehyde 2,1-aminomutase (Tolumonas auensis (strain DSM 9187 / NBRC 110442 / TA 4)).